The chain runs to 510 residues: MGVLKFKHIFFRSFVKSSGVSQIVFTFLLIPCCLTLNFRAPPIIPNVPFLWAWNAPSEFCLGKFNEPLDMSLFTLMGSPRINVTGQGVTIFYVDRLGYYPYIDLTTGVTVHGGIPQKVSLQDHLDKSKQDILFYMPVDNLGMAVIDWEEWRPTWARNWKPKDVYKNRSIELVQQQNVQLSLPQATDKAKQEFEKAGKDFMLETIKLGRSLRPNHLWGYYLFPDCYNHHYRKPGYNGSCFDVEIKRNDDLSWLWNESTALYPSIYLNTQQSVVVATLYVRNRVREAIRVSKIPDAKNPLPVFVYARLVFTDQVLKFLSREELVSTLGETVALGASGIVIWGSLSITRSMKSCLLLDTYMETILNPYIINVTLAAKMCSQVLCQEQGVCIRKDWNSSDYLHLNPDNFDIRLEKGGKFTVHGKPTVEDLEEFSEKFYCSCYTNLSCKEKADVKDTDAVDVCIADGVCIDASLKPPVETEGSPPIFYNTSSSTVSTTMFIVNILFLIISSVASL.

The first 35 residues, 1-35 (MGVLKFKHIFFRSFVKSSGVSQIVFTFLLIPCCLT), serve as a signal peptide directing secretion. 2 disulfide bridges follow: cysteine 60/cysteine 351 and cysteine 224/cysteine 238. N-linked (GlcNAc...) asparagine glycosylation occurs at asparagine 82. The active-site Proton donor is the glutamate 148. N-linked (GlcNAc...) asparagine glycans are attached at residues asparagine 166, asparagine 235, asparagine 254, and asparagine 368. Cystine bridges form between cysteine 376–cysteine 387, cysteine 381–cysteine 435, and cysteine 437–cysteine 464. 3 N-linked (GlcNAc...) asparagine glycosylation sites follow: asparagine 393, asparagine 440, and asparagine 484. Serine 491 is lipidated: GPI-anchor amidated serine. A propeptide spans 492–510 (TTMFIVNILFLIISSVASL) (removed in mature form).

It belongs to the glycosyl hydrolase 56 family. In terms of tissue distribution, testis.

It localises to the cell membrane. It catalyses the reaction Random hydrolysis of (1-&gt;4)-linkages between N-acetyl-beta-D-glucosamine and D-glucuronate residues in hyaluronate.. Its function is as follows. Involved in sperm-egg adhesion. Upon fertilization sperm must first penetrate a layer of cumulus cells that surrounds the egg before reaching the zona pellucida. The cumulus cells are embedded in a matrix containing hyaluronic acid which is formed prior to ovulation. This protein aids in penetrating the layer of cumulus cells by digesting hyaluronic acid. This chain is Hyaluronidase PH-20 (SPAM1), found in Macaca fascicularis (Crab-eating macaque).